Here is a 40-residue protein sequence, read N- to C-terminus: Photosystem II reaction center protein J (40 aa).

Residues 8 to 28 form a helical membrane-spanning segment; the sequence is IPLWLVGTVTGTLVIGLMGIF.

It belongs to the PsbJ family. As to quaternary structure, PSII is composed of 1 copy each of membrane proteins PsbA, PsbB, PsbC, PsbD, PsbE, PsbF, PsbH, PsbI, PsbJ, PsbK, PsbL, PsbM, PsbT, PsbX, PsbY, PsbZ, Psb30/Ycf12, at least 3 peripheral proteins of the oxygen-evolving complex and a large number of cofactors. It forms dimeric complexes.

Its subcellular location is the plastid. The protein localises to the chloroplast thylakoid membrane. One of the components of the core complex of photosystem II (PSII). PSII is a light-driven water:plastoquinone oxidoreductase that uses light energy to abstract electrons from H(2)O, generating O(2) and a proton gradient subsequently used for ATP formation. It consists of a core antenna complex that captures photons, and an electron transfer chain that converts photonic excitation into a charge separation. The protein is Photosystem II reaction center protein J of Psilotum nudum (Whisk fern).